The sequence spans 487 residues: ATP synthase subunit beta (487 aa).

164–171 (GGAGVGKT) provides a ligand contact to ATP.

It belongs to the ATPase alpha/beta chains family. In terms of assembly, F-type ATPases have 2 components, CF(1) - the catalytic core - and CF(0) - the membrane proton channel. CF(1) has five subunits: alpha(3), beta(3), gamma(1), delta(1), epsilon(1). CF(0) has four main subunits: a(1), b(1), b'(1) and c(9-12).

The protein resides in the cellular thylakoid membrane. It catalyses the reaction ATP + H2O + 4 H(+)(in) = ADP + phosphate + 5 H(+)(out). In terms of biological role, produces ATP from ADP in the presence of a proton gradient across the membrane. The catalytic sites are hosted primarily by the beta subunits. This Synechococcus sp. (strain WH7803) protein is ATP synthase subunit beta.